A 318-amino-acid chain; its full sequence is Ferric enterobactin-binding periplasmic protein FepB (318 aa).

The signal sequence occupies residues 1–26 (MRLAPLYRNALLLTGLLLSGIAAVQA). Residues 48–318 (RIVSTSVTLT…QVLDRLKALF (271 aa)) form the Fe/B12 periplasmic-binding domain.

The protein belongs to the bacterial solute-binding protein 8 family. As to quaternary structure, the complex is composed of two ATP-binding proteins (FepC), two transmembrane proteins (FepD and FepG) and a solute-binding protein (FepB).

Its subcellular location is the periplasm. Part of the ABC transporter complex FepBDGC involved in ferric enterobactin uptake. Binds ferric enterobactin. The polypeptide is Ferric enterobactin-binding periplasmic protein FepB (fepB) (Escherichia coli O6:H1 (strain CFT073 / ATCC 700928 / UPEC)).